A 448-amino-acid chain; its full sequence is Trigger factor (448 aa).

In terms of domain architecture, PPIase FKBP-type spans 162 to 243; it reads DDFAIIDIEA…VQQTKERKLP (82 aa). The disordered stretch occupies residues 426 to 448; sequence DEGKAVDPSEYFGEEEESAEESE. Residues 437–448 are compositionally biased toward acidic residues; the sequence is FGEEEESAEESE.

The protein belongs to the FKBP-type PPIase family. Tig subfamily.

It is found in the cytoplasm. It carries out the reaction [protein]-peptidylproline (omega=180) = [protein]-peptidylproline (omega=0). In terms of biological role, involved in protein export. Acts as a chaperone by maintaining the newly synthesized protein in an open conformation. Functions as a peptidyl-prolyl cis-trans isomerase. This chain is Trigger factor, found in Corynebacterium diphtheriae (strain ATCC 700971 / NCTC 13129 / Biotype gravis).